The sequence spans 177 residues: Large ribosomal subunit protein uL6 (177 aa).

Belongs to the universal ribosomal protein uL6 family. Part of the 50S ribosomal subunit.

Its function is as follows. This protein binds to the 23S rRNA, and is important in its secondary structure. It is located near the subunit interface in the base of the L7/L12 stalk, and near the tRNA binding site of the peptidyltransferase center. This Histophilus somni (strain 129Pt) (Haemophilus somnus) protein is Large ribosomal subunit protein uL6.